We begin with the raw amino-acid sequence, 344 residues long: N-acetyl-gamma-glutamyl-phosphate reductase (344 aa).

Residue cysteine 150 is part of the active site.

It belongs to the NAGSA dehydrogenase family. Type 1 subfamily.

It localises to the cytoplasm. It catalyses the reaction N-acetyl-L-glutamate 5-semialdehyde + phosphate + NADP(+) = N-acetyl-L-glutamyl 5-phosphate + NADPH + H(+). It participates in amino-acid biosynthesis; L-arginine biosynthesis; N(2)-acetyl-L-ornithine from L-glutamate: step 3/4. In terms of biological role, catalyzes the NADPH-dependent reduction of N-acetyl-5-glutamyl phosphate to yield N-acetyl-L-glutamate 5-semialdehyde. This is N-acetyl-gamma-glutamyl-phosphate reductase from Pseudomonas paraeruginosa (strain DSM 24068 / PA7) (Pseudomonas aeruginosa (strain PA7)).